Consider the following 323-residue polypeptide: MRQATLYRYRLPVDAGVALRNQRLKSRDGLLVRLHEDGREGWGEIAPLPEFSHETLPEAQEAACRLLAQWQVGAAPAESPLPSVAFGLSCAQAELSGTLPQAANYRSATLCNGDPDALFQVLQSIPGEKVAKVKVGLYEAVRDGMIVNLLLEALPDLHLRLDANRSWTRAKADGFAKYVNPDWRDRILFLEEPCKTRDESRAFARDTGIAIAWDESVRDADFRVEAEPGVAAIIIKPTLTGSLQRCRQLVTQAHQAGLSAVISSSIESSLGLSQLARMAAWLTPGTPPGLDTLMLMQAQLLRAWPACTLPLWGEDTLDVVWQG.

Catalysis depends on lysine 134, which acts as the Proton donor. Mg(2+) contacts are provided by aspartate 162, glutamate 191, and aspartate 214. Lysine 236 serves as the catalytic Proton acceptor.

This sequence belongs to the mandelate racemase/muconate lactonizing enzyme family. MenC type 1 subfamily. The cofactor is a divalent metal cation.

It catalyses the reaction (1R,6R)-6-hydroxy-2-succinyl-cyclohexa-2,4-diene-1-carboxylate = 2-succinylbenzoate + H2O. It functions in the pathway quinol/quinone metabolism; 1,4-dihydroxy-2-naphthoate biosynthesis; 1,4-dihydroxy-2-naphthoate from chorismate: step 4/7. The protein operates within quinol/quinone metabolism; menaquinone biosynthesis. Converts 2-succinyl-6-hydroxy-2,4-cyclohexadiene-1-carboxylate (SHCHC) to 2-succinylbenzoate (OSB). The polypeptide is o-succinylbenzoate synthase (Edwardsiella ictaluri (strain 93-146)).